Reading from the N-terminus, the 617-residue chain is D-glucuronyl C5-epimerase (617 aa).

The Cytoplasmic segment spans residues 1–11; that stretch reads MRCLAARVNYK. A helical; Signal-anchor for type II membrane protein transmembrane segment spans residues 12–28; sequence TLIIICALFTLVTVLLW. The Lumenal segment spans residues 29 to 617; the sequence is NKCSSDKAIQ…YLKGSRAKHN (589 aa). Substrate-binding positions include tyrosine 179, 184–186, glutamine 201, tyrosine 209, glutamine 212, and glutamine 215; that span reads RDR. Positions 237, 239, 268, 269, and 392 each coordinate Ca(2+). Residues 429-432, 499-500, asparagine 510, tyrosine 514, tyrosine 560, arginine 563, and 572-581 each bind substrate; these read KLGE, EY, and NLARWDYHTT.

The protein belongs to the D-glucuronyl C5-epimerase family. As to quaternary structure, homodimer. Interacts with HS2ST1.

The protein localises to the golgi apparatus membrane. It carries out the reaction [heparosan-N-sulfate](n) = [heparan-N-sulfate](n). Its pathway is glycan metabolism; heparan sulfate biosynthesis. It participates in glycan metabolism; heparin biosynthesis. In terms of biological role, converts D-glucuronic acid residues adjacent to N-sulfate sugar residues to L-iduronic acid residues, both in maturing heparan sulfate (HS) and heparin chains. This is important for further modifications that determine the specificity of interactions between these glycosaminoglycans and proteins. The chain is D-glucuronyl C5-epimerase (GLCE) from Bos taurus (Bovine).